A 267-amino-acid polypeptide reads, in one-letter code: Glutamate 5-kinase (267 aa).

Residue Lys-15 coordinates ATP. 3 residues coordinate substrate: Ser-55, Asp-142, and Asn-158. ATP is bound by residues 178–179 (SD) and 220–226 (TGGMATK).

Belongs to the glutamate 5-kinase family.

Its subcellular location is the cytoplasm. The enzyme catalyses L-glutamate + ATP = L-glutamyl 5-phosphate + ADP. It participates in amino-acid biosynthesis; L-proline biosynthesis; L-glutamate 5-semialdehyde from L-glutamate: step 1/2. Functionally, catalyzes the transfer of a phosphate group to glutamate to form L-glutamate 5-phosphate. This Ligilactobacillus salivarius (strain UCC118) (Lactobacillus salivarius) protein is Glutamate 5-kinase.